The sequence spans 194 residues: PBAN-type neuropeptides (194 aa).

The first 23 residues, 1-23, serve as a signal peptide directing secretion; it reads MFNQTQLFVFLAVFTTSSVLGNN. Position 47 is a leucine amide (Leu-47). Positions 51-94 are excised as a propeptide; sequence SLRISTEDNRQAFFKLLEAADALKYYYDQLPYEMQADEPETRVT. Leucine amide occurs at positions 103, 123, 159, and 169. Positions 172-194 are excised as a propeptide; sequence ELSYDMMPNKIRVVRSTNKTRST.

Belongs to the pyrokinin family. In terms of tissue distribution, expressed in the subesophageal ganglions. Not found in corpora cardiaca, corpora allata and thoracic ganglia.

Its subcellular location is the secreted. In terms of biological role, a hormone that controls sex pheromone production in females and pheromone responsiveness in male. Also mediates visceral muscle contractile activity (myotropic activity). The sequence is that of PBAN-type neuropeptides from Helicoverpa zea (Corn earworm moth).